A 242-amino-acid polypeptide reads, in one-letter code: Biosynthetic peptidoglycan transglycosylase (242 aa).

The chain crosses the membrane as a helical span at residues 19-39; sequence ILAALAVFWGGGIALFSVVPV.

This sequence belongs to the glycosyltransferase 51 family.

The protein localises to the cell inner membrane. The enzyme catalyses [GlcNAc-(1-&gt;4)-Mur2Ac(oyl-L-Ala-gamma-D-Glu-L-Lys-D-Ala-D-Ala)](n)-di-trans,octa-cis-undecaprenyl diphosphate + beta-D-GlcNAc-(1-&gt;4)-Mur2Ac(oyl-L-Ala-gamma-D-Glu-L-Lys-D-Ala-D-Ala)-di-trans,octa-cis-undecaprenyl diphosphate = [GlcNAc-(1-&gt;4)-Mur2Ac(oyl-L-Ala-gamma-D-Glu-L-Lys-D-Ala-D-Ala)](n+1)-di-trans,octa-cis-undecaprenyl diphosphate + di-trans,octa-cis-undecaprenyl diphosphate + H(+). It functions in the pathway cell wall biogenesis; peptidoglycan biosynthesis. Its function is as follows. Peptidoglycan polymerase that catalyzes glycan chain elongation from lipid-linked precursors. The polypeptide is Biosynthetic peptidoglycan transglycosylase (Salmonella schwarzengrund (strain CVM19633)).